The chain runs to 179 residues: Large ribosomal subunit protein uL5 (179 aa).

This sequence belongs to the universal ribosomal protein uL5 family. As to quaternary structure, part of the 50S ribosomal subunit; part of the 5S rRNA/L5/L18/L25 subcomplex. Contacts the 5S rRNA and the P site tRNA. Forms a bridge to the 30S subunit in the 70S ribosome.

In terms of biological role, this is one of the proteins that bind and probably mediate the attachment of the 5S RNA into the large ribosomal subunit, where it forms part of the central protuberance. In the 70S ribosome it contacts protein S13 of the 30S subunit (bridge B1b), connecting the 2 subunits; this bridge is implicated in subunit movement. Contacts the P site tRNA; the 5S rRNA and some of its associated proteins might help stabilize positioning of ribosome-bound tRNAs. The protein is Large ribosomal subunit protein uL5 of Dichelobacter nodosus (strain VCS1703A).